The sequence spans 312 residues: tRNA dimethylallyltransferase (312 aa).

11-18 (GPTAAGKS) contacts ATP. 13-18 (TAAGKS) provides a ligand contact to substrate. Interaction with substrate tRNA stretches follow at residues 36-39 (DSAT), 160-164 (QRIQR), and 243-248 (RCVGYR).

This sequence belongs to the IPP transferase family. As to quaternary structure, monomer. It depends on Mg(2+) as a cofactor.

It catalyses the reaction adenosine(37) in tRNA + dimethylallyl diphosphate = N(6)-dimethylallyladenosine(37) in tRNA + diphosphate. Catalyzes the transfer of a dimethylallyl group onto the adenine at position 37 in tRNAs that read codons beginning with uridine, leading to the formation of N6-(dimethylallyl)adenosine (i(6)A). This chain is tRNA dimethylallyltransferase, found in Bordetella avium (strain 197N).